A 363-amino-acid chain; its full sequence is Type 3 secretion system translocon protein SctB (363 aa).

Residues Met1–Ile16 are compositionally biased toward polar residues. A disordered region spans residues Met1 to Ser30. The span at Ser17 to Ser30 shows a compositional bias: low complexity. The interval Tyr33 to Ile73 is ipgC chaperone binding domain. Residues Ile99 to Leu120 form a helical membrane-spanning segment.

The protein belongs to the SctB/SipC family. As to quaternary structure, the core secretion machinery of the T3SS is composed of approximately 20 different proteins, including cytoplasmic components, a base, an export apparatus and a needle. This subunit is involved in the formation of a pore, called the translocon, in host membrane. Interacts with IpaB/SctE. Interacts with the molecular chaperone IpgC, which prevents premature association with IpaB/SctE within the cytoplasm of Shigella cells. Does not interact with CDC42 or RAC1 GTPases in vitro.

The protein localises to the secreted. It localises to the host membrane. With respect to regulation, interaction with the membrane is affected by the pH. In terms of biological role, component of the type III secretion system (T3SS), also called injectisome, which is used to inject bacterial effector proteins into eukaryotic host cells. IpaB/SctE and IpaC/SctB are inserted into the host membrane where they form a pore and allow the translocation of effector proteins into the cytosol of target cells. Induction and secretion of IpaC/SctB comprise the final step in triggering the induction of full type III secretion. Required for efficient dissemination. Necessary for lysis of the two cellular membranes that surround bacteria in protrusions during cell-to-cell spread. Contribute to actin nucleation in vitro, which may be a necessary step in Shigella invasion. The chain is Type 3 secretion system translocon protein SctB from Shigella flexneri.